We begin with the raw amino-acid sequence, 49 residues long: uncharacterized protein (49 aa).

A helical transmembrane segment spans residues 22–42 (AIVGISIMIIIAIGIYLIIEY).

The protein resides in the membrane. This is an uncharacterized protein from Methanocaldococcus jannaschii (strain ATCC 43067 / DSM 2661 / JAL-1 / JCM 10045 / NBRC 100440) (Methanococcus jannaschii).